The primary structure comprises 224 residues: Phosphoribosylformylglycinamidine synthase subunit PurQ (224 aa).

Residues 3–224 (FGVVVFPGSN…GLLEKVVALA (222 aa)) form the Glutamine amidotransferase type-1 domain. Cys86 functions as the Nucleophile in the catalytic mechanism. Active-site residues include His195 and Glu197.

In terms of assembly, part of the FGAM synthase complex composed of 1 PurL, 1 PurQ and 2 PurS subunits.

The protein resides in the cytoplasm. The enzyme catalyses N(2)-formyl-N(1)-(5-phospho-beta-D-ribosyl)glycinamide + L-glutamine + ATP + H2O = 2-formamido-N(1)-(5-O-phospho-beta-D-ribosyl)acetamidine + L-glutamate + ADP + phosphate + H(+). It catalyses the reaction L-glutamine + H2O = L-glutamate + NH4(+). It participates in purine metabolism; IMP biosynthesis via de novo pathway; 5-amino-1-(5-phospho-D-ribosyl)imidazole from N(2)-formyl-N(1)-(5-phospho-D-ribosyl)glycinamide: step 1/2. Functionally, part of the phosphoribosylformylglycinamidine synthase complex involved in the purines biosynthetic pathway. Catalyzes the ATP-dependent conversion of formylglycinamide ribonucleotide (FGAR) and glutamine to yield formylglycinamidine ribonucleotide (FGAM) and glutamate. The FGAM synthase complex is composed of three subunits. PurQ produces an ammonia molecule by converting glutamine to glutamate. PurL transfers the ammonia molecule to FGAR to form FGAM in an ATP-dependent manner. PurS interacts with PurQ and PurL and is thought to assist in the transfer of the ammonia molecule from PurQ to PurL. This is Phosphoribosylformylglycinamidine synthase subunit PurQ from Nostoc sp. (strain PCC 7120 / SAG 25.82 / UTEX 2576).